The chain runs to 459 residues: UDP-N-acetylmuramoyl-tripeptide--D-alanyl-D-alanine ligase (459 aa).

121 to 127 (GSSGKTT) contributes to the ATP binding site.

Belongs to the MurCDEF family. MurF subfamily.

Its subcellular location is the cytoplasm. The catalysed reaction is D-alanyl-D-alanine + UDP-N-acetyl-alpha-D-muramoyl-L-alanyl-gamma-D-glutamyl-meso-2,6-diaminopimelate + ATP = UDP-N-acetyl-alpha-D-muramoyl-L-alanyl-gamma-D-glutamyl-meso-2,6-diaminopimeloyl-D-alanyl-D-alanine + ADP + phosphate + H(+). It participates in cell wall biogenesis; peptidoglycan biosynthesis. Its function is as follows. Involved in cell wall formation. Catalyzes the final step in the synthesis of UDP-N-acetylmuramoyl-pentapeptide, the precursor of murein. The polypeptide is UDP-N-acetylmuramoyl-tripeptide--D-alanyl-D-alanine ligase (Treponema pallidum (strain Nichols)).